The chain runs to 968 residues: Translation initiation factor IF-2 (968 aa).

A compositionally biased stretch (low complexity) spans 305-319 (KPAAAAGAPGAPGAA). Residues 305 to 376 (KPAAAAGAPG…NDRDARPEST (72 aa)) form a disordered region. A tr-type G domain is found at 468-635 (PRAPVVTVMG…QVLLQAEVLE (168 aa)). The segment at 477–484 (GHVDHGKT) is G1. GTP is bound at residue 477-484 (GHVDHGKT). The tract at residues 502–506 (GITQH) is G2. Residues 523–526 (DTPG) are G3. GTP-binding positions include 523-527 (DTPGH) and 577-580 (NKID). The interval 577–580 (NKID) is G4. Positions 613–615 (SAR) are G5.

It belongs to the TRAFAC class translation factor GTPase superfamily. Classic translation factor GTPase family. IF-2 subfamily.

It is found in the cytoplasm. In terms of biological role, one of the essential components for the initiation of protein synthesis. Protects formylmethionyl-tRNA from spontaneous hydrolysis and promotes its binding to the 30S ribosomal subunits. Also involved in the hydrolysis of GTP during the formation of the 70S ribosomal complex. The chain is Translation initiation factor IF-2 from Polaromonas sp. (strain JS666 / ATCC BAA-500).